A 975-amino-acid polypeptide reads, in one-letter code: C-1-tetrahydrofolate synthase, mitochondrial (975 aa).

Residues 1 to 34 (MLSRLSLLSNSRAFQQARWRIYRLKVSPTVHASQ) constitute a mitochondrion transit peptide. The methylenetetrahydrofolate dehydrogenase and cyclohydrolase stretch occupies residues 35–343 (YHILSGRKLA…KPLPLHLESP (309 aa)). Residues 83–87 (YVRMK) and 130–132 (IQL) contribute to the substrate site. NADP(+) is bound by residues 201–203 (GRS) and serine 226. Residue 301–305 (PGGVG) participates in substrate binding. Residues 344–975 (VPSDIDISRA…DDDGEIEGLF (632 aa)) form a formyltetrahydrofolate synthetase region. Residue 408-415 (TPLGEGKS) participates in ATP binding.

This sequence in the N-terminal section; belongs to the tetrahydrofolate dehydrogenase/cyclohydrolase family. The protein in the C-terminal section; belongs to the formate--tetrahydrofolate ligase family. As to quaternary structure, homodimer.

It is found in the mitochondrion. It catalyses the reaction (6R)-5,10-methylene-5,6,7,8-tetrahydrofolate + NADP(+) = (6R)-5,10-methenyltetrahydrofolate + NADPH. The catalysed reaction is (6R)-5,10-methenyltetrahydrofolate + H2O = (6R)-10-formyltetrahydrofolate + H(+). It carries out the reaction (6S)-5,6,7,8-tetrahydrofolate + formate + ATP = (6R)-10-formyltetrahydrofolate + ADP + phosphate. It participates in one-carbon metabolism; tetrahydrofolate interconversion. In terms of biological role, mitochondrial isozyme of C-1-tetrahydrofolate synthase. The trifunctional enzyme catalyzes the interconversion of the one-carbon derivatives of tetrahydrofolate (THF) between different oxidation states by the enzymatic activities 10-formyltetrahydrofolate synthetase, 5,lO-methenyltetrahydrofolate cyclohydrolase, and 5,lO-methylenetetrahydrofolate dehydrogenase. In Saccharomyces cerevisiae (strain ATCC 204508 / S288c) (Baker's yeast), this protein is C-1-tetrahydrofolate synthase, mitochondrial.